Here is a 146-residue protein sequence, read N- to C-terminus: Small ribosomal subunit protein uS13A (146 aa).

An N-acetylserine modification is found at S2. Residue K36 forms a Glycyl lysine isopeptide (Lys-Gly) (interchain with G-Cter in ubiquitin) linkage. K48 is subject to N6-methyllysine; by RKM1. Glycyl lysine isopeptide (Lys-Gly) (interchain with G-Cter in ubiquitin) cross-links involve residues K49, K80, and K96.

Belongs to the universal ribosomal protein uS13 family. Component of the small ribosomal subunit (SSU). Mature yeast ribosomes consist of a small (40S) and a large (60S) subunit. The 40S small subunit contains 1 molecule of ribosomal RNA (18S rRNA) and 33 different proteins (encoded by 57 genes). The large 60S subunit contains 3 rRNA molecules (25S, 5.8S and 5S rRNA) and 46 different proteins (encoded by 81 genes). Post-translationally, N-terminally acetylated by acetyltransferase NatA.

The protein resides in the cytoplasm. Component of the ribosome, a large ribonucleoprotein complex responsible for the synthesis of proteins in the cell. The small ribosomal subunit (SSU) binds messenger RNAs (mRNAs) and translates the encoded message by selecting cognate aminoacyl-transfer RNA (tRNA) molecules. The large subunit (LSU) contains the ribosomal catalytic site termed the peptidyl transferase center (PTC), which catalyzes the formation of peptide bonds, thereby polymerizing the amino acids delivered by tRNAs into a polypeptide chain. The nascent polypeptides leave the ribosome through a tunnel in the LSU and interact with protein factors that function in enzymatic processing, targeting, and the membrane insertion of nascent chains at the exit of the ribosomal tunnel. This is Small ribosomal subunit protein uS13A from Saccharomyces cerevisiae (strain ATCC 204508 / S288c) (Baker's yeast).